The chain runs to 235 residues: Methylosome subunit pICln (235 aa).

The disordered stretch occupies residues 1–21 (MSFLKSFPPPGSAEGLRQQQP). N-acetylserine is present on Ser2. A phosphoserine mark is found at Ser100, Ser142, Ser191, Ser193, Ser196, and Ser208. A disordered region spans residues 133–157 (LHPDPEDEDSDDYDGEEYDVEAHEQ). A compositionally biased stretch (acidic residues) spans 137-151 (PEDEDSDDYDGEEYD). The disordered stretch occupies residues 195–217 (SSQYNMAGVRTEDSTRDYEDGME). Positions 204 to 213 (RTEDSTRDYE) are enriched in basic and acidic residues. The residue at position 221 (Thr221) is a Phosphothreonine.

The protein belongs to the pICln (TC 1.A.47) family. In terms of assembly, component of the methylosome, a 20S complex containing at least PRMT5/SKB1, WDR77/MEP50 and CLNS1A/pICln. May mediate SNRPD1 and SNRPD3 methylation. Forms a 6S pICln-Sm complex composed of CLNS1A/pICln, SNRPD1, SNRPD2, SNRPE, SNRPF and SNRPG; ring-like structure where CLNS1A/pICln mimics additional Sm proteins and which is unable to assemble into the core snRNP. Interacts with LSM10 and LSM11.

It is found in the cytoplasm. The protein resides in the cytosol. The protein localises to the nucleus. Its subcellular location is the cytoskeleton. Functionally, involved in both the assembly of spliceosomal snRNPs and the methylation of Sm proteins. Chaperone that regulates the assembly of spliceosomal U1, U2, U4 and U5 small nuclear ribonucleoproteins (snRNPs), the building blocks of the spliceosome, and thereby plays an important role in the splicing of cellular pre-mRNAs. Most spliceosomal snRNPs contain a common set of Sm proteins SNRPB, SNRPD1, SNRPD2, SNRPD3, SNRPE, SNRPF and SNRPG that assemble in a heptameric protein ring on the Sm site of the small nuclear RNA to form the core snRNP (Sm core). In the cytosol, the Sm proteins SNRPD1, SNRPD2, SNRPE, SNRPF and SNRPG are trapped in an inactive 6S pICln-Sm complex by the chaperone CLNS1A that controls the assembly of the core snRNP. Dissociation by the SMN complex of CLNS1A from the trapped Sm proteins and their transfer to an SMN-Sm complex triggers the assembly of core snRNPs and their transport to the nucleus. The protein is Methylosome subunit pICln (CLNS1A) of Canis lupus familiaris (Dog).